Reading from the N-terminus, the 244-residue chain is DNA polymerase sliding clamp (244 aa).

It belongs to the PCNA family. In terms of assembly, homotrimer. The subunits circularize to form a toroid; DNA passes through its center. Replication factor C (RFC) is required to load the toroid on the DNA.

Its function is as follows. Sliding clamp subunit that acts as a moving platform for DNA processing. Responsible for tethering the catalytic subunit of DNA polymerase and other proteins to DNA during high-speed replication. The polypeptide is DNA polymerase sliding clamp (Methanobrevibacter smithii (strain ATCC 35061 / DSM 861 / OCM 144 / PS)).